Consider the following 496-residue polypeptide: Amino-acid acetyltransferase, mitochondrial (496 aa).

The N-acetyltransferase domain occupies tyrosine 333–threonine 493.

Belongs to the acetyltransferase family.

It localises to the mitochondrion. The catalysed reaction is L-glutamate + acetyl-CoA = N-acetyl-L-glutamate + CoA + H(+). Its pathway is amino-acid biosynthesis; L-arginine biosynthesis; N(2)-acetyl-L-ornithine from L-glutamate: step 1/4. N-acetylglutamate synthase involved in arginine biosynthesis. This Schizosaccharomyces japonicus (strain yFS275 / FY16936) (Fission yeast) protein is Amino-acid acetyltransferase, mitochondrial (arg2).